The primary structure comprises 336 residues: Holliday junction branch migration complex subunit RuvB (336 aa).

The tract at residues 4–184 (ADRLISADAI…FGIVQRLEFY (181 aa)) is large ATPase domain (RuvB-L). Residues Arg24, Gly65, Lys68, Thr69, Thr70, 131–133 (EDY), Arg174, Tyr184, and Arg221 each bind ATP. Thr69 is a Mg(2+) binding site. Residues 185 to 255 (NVADLQYIVG…VATQALDMLA (71 aa)) are small ATPAse domain (RuvB-S). The tract at residues 258-336 (TEGFDYMDRK…HFGLTREDLG (79 aa)) is head domain (RuvB-H). DNA contacts are provided by Arg294, Arg313, and Arg318.

This sequence belongs to the RuvB family. In terms of assembly, homohexamer. Forms an RuvA(8)-RuvB(12)-Holliday junction (HJ) complex. HJ DNA is sandwiched between 2 RuvA tetramers; dsDNA enters through RuvA and exits via RuvB. An RuvB hexamer assembles on each DNA strand where it exits the tetramer. Each RuvB hexamer is contacted by two RuvA subunits (via domain III) on 2 adjacent RuvB subunits; this complex drives branch migration. In the full resolvosome a probable DNA-RuvA(4)-RuvB(12)-RuvC(2) complex forms which resolves the HJ.

It localises to the cytoplasm. It carries out the reaction ATP + H2O = ADP + phosphate + H(+). In terms of biological role, the RuvA-RuvB-RuvC complex processes Holliday junction (HJ) DNA during genetic recombination and DNA repair, while the RuvA-RuvB complex plays an important role in the rescue of blocked DNA replication forks via replication fork reversal (RFR). RuvA specifically binds to HJ cruciform DNA, conferring on it an open structure. The RuvB hexamer acts as an ATP-dependent pump, pulling dsDNA into and through the RuvAB complex. RuvB forms 2 homohexamers on either side of HJ DNA bound by 1 or 2 RuvA tetramers; 4 subunits per hexamer contact DNA at a time. Coordinated motions by a converter formed by DNA-disengaged RuvB subunits stimulates ATP hydrolysis and nucleotide exchange. Immobilization of the converter enables RuvB to convert the ATP-contained energy into a lever motion, pulling 2 nucleotides of DNA out of the RuvA tetramer per ATP hydrolyzed, thus driving DNA branch migration. The RuvB motors rotate together with the DNA substrate, which together with the progressing nucleotide cycle form the mechanistic basis for DNA recombination by continuous HJ branch migration. Branch migration allows RuvC to scan DNA until it finds its consensus sequence, where it cleaves and resolves cruciform DNA. This chain is Holliday junction branch migration complex subunit RuvB, found in Pectobacterium carotovorum subsp. carotovorum (strain PC1).